Consider the following 862-residue polypeptide: Valine--tRNA ligase (862 aa).

The 'HIGH' region signature appears at 47-57; it reads PTASGSLHIGH. The segment at 110–130 is disordered; it reads EPGLTPPFEGGDNKSSKAADQ. A compositionally biased stretch (basic and acidic residues) spans 120–129; that stretch reads GDNKSSKAAD. The 'KMSKS' region signature appears at 584–588; the sequence is KMSKS. Residue Lys587 participates in ATP binding.

It belongs to the class-I aminoacyl-tRNA synthetase family. ValS type 2 subfamily. As to quaternary structure, monomer.

The protein resides in the cytoplasm. It catalyses the reaction tRNA(Val) + L-valine + ATP = L-valyl-tRNA(Val) + AMP + diphosphate. Functionally, catalyzes the attachment of valine to tRNA(Val). As ValRS can inadvertently accommodate and process structurally similar amino acids such as threonine, to avoid such errors, it has a 'posttransfer' editing activity that hydrolyzes mischarged Thr-tRNA(Val) in a tRNA-dependent manner. This is Valine--tRNA ligase from Leifsonia xyli subsp. xyli (strain CTCB07).